The primary structure comprises 217 residues: MNGIHDTGGAHGYGPVYREPNEPVFRYDWEKTVMSLLPALLANANFNLDEFRHSIERMGPAHYLEGTYYEHWLHVFENLLVEKGVLTATEVATGKAASGKTATRVLTPAIVDDSSAPGLLRPGGGFSFFPVGDKVRVLNKNPVGHTRMPRYTRAKWGQWSSTMVCFVTPDTAAHGKGEQPQHVYTVSFTSVELWGQDASSPKDTIRVDLWDDYLEPA.

Belongs to the nitrile hydratase subunit beta family. As to quaternary structure, heterodimer of an alpha and a beta chain.

The catalysed reaction is an aliphatic primary amide = an aliphatic nitrile + H2O. Its function is as follows. NHase catalyzes the hydration of various nitrile compounds to the corresponding amides. This Pseudomonas putida (Arthrobacter siderocapsulatus) protein is Nitrile hydratase subunit beta (nthB).